The primary structure comprises 798 residues: Type 2 DNA topoisomerase 6 subunit B (798 aa).

ATP contacts are provided by residues asparagine 60, aspartate 91, 112–113 (SR), and 122–129 (GQQGIGIS). Residues 221–233 (EPEDSFKSERATE) are compositionally biased toward basic and acidic residues. The segment at 221 to 245 (EPEDSFKSERATEELPPETEEIRPH) is disordered. Lysine 629 contacts ATP.

This sequence belongs to the TOP6B family. In terms of assembly, homodimer. Heterotetramer of two Top6A and two Top6B chains.

The enzyme catalyses ATP-dependent breakage, passage and rejoining of double-stranded DNA.. In terms of biological role, relaxes both positive and negative superturns and exhibits a strong decatenase activity. This chain is Type 2 DNA topoisomerase 6 subunit B, found in Natronomonas pharaonis (strain ATCC 35678 / DSM 2160 / CIP 103997 / JCM 8858 / NBRC 14720 / NCIMB 2260 / Gabara) (Halobacterium pharaonis).